The following is a 404-amino-acid chain: Cysteine desulfurase IscS (404 aa).

Pyridoxal 5'-phosphate-binding positions include 75 to 76, N155, Q183, and 203 to 205; these read AT and SGH. N6-(pyridoxal phosphate)lysine is present on K206. T243 is a binding site for pyridoxal 5'-phosphate. C328 (cysteine persulfide intermediate) is an active-site residue. C328 serves as a coordination point for [2Fe-2S] cluster.

It belongs to the class-V pyridoxal-phosphate-dependent aminotransferase family. NifS/IscS subfamily. Homodimer. Forms a heterotetramer with IscU, interacts with other sulfur acceptors. The cofactor is pyridoxal 5'-phosphate.

The protein localises to the cytoplasm. It catalyses the reaction (sulfur carrier)-H + L-cysteine = (sulfur carrier)-SH + L-alanine. Its pathway is cofactor biosynthesis; iron-sulfur cluster biosynthesis. In terms of biological role, master enzyme that delivers sulfur to a number of partners involved in Fe-S cluster assembly, tRNA modification or cofactor biosynthesis. Catalyzes the removal of elemental sulfur atoms from cysteine to produce alanine. Functions as a sulfur delivery protein for Fe-S cluster synthesis onto IscU, an Fe-S scaffold assembly protein, as well as other S acceptor proteins. This Shewanella baltica (strain OS155 / ATCC BAA-1091) protein is Cysteine desulfurase IscS.